The primary structure comprises 80 residues: Regulatory protein HrpD6 (80 aa).

Functionally, involved in the regulation of several genes of the hrp-hrc-hpa cluster, which encodes a type III secretion system (T3SS). Upregulates the expression of hpa2, hpa1 and hpaB and partially controls the expression of hrcC and hrcT. Controls the secretion of the T3SS TAL effector AvrXa27. Also regulates the expression of several HrpX-regulated protein (Xrp) genes. Has no influence on hrpG or hrpX expression. In Xanthomonas oryzae pv. oryzicola, this protein is Regulatory protein HrpD6.